A 164-amino-acid chain; its full sequence is Phosphopantetheine adenylyltransferase (164 aa).

Thr-9 provides a ligand contact to substrate. Residues 9–10 and His-17 each bind ATP; that span reads TF. Substrate-binding residues include Lys-41, Leu-73, and Arg-87. ATP-binding positions include 88 to 90, Glu-98, and 123 to 129; these read GLR and YMFISAT.

Belongs to the bacterial CoaD family. Homohexamer. Mg(2+) serves as cofactor.

It localises to the cytoplasm. It carries out the reaction (R)-4'-phosphopantetheine + ATP + H(+) = 3'-dephospho-CoA + diphosphate. Its pathway is cofactor biosynthesis; coenzyme A biosynthesis; CoA from (R)-pantothenate: step 4/5. Functionally, reversibly transfers an adenylyl group from ATP to 4'-phosphopantetheine, yielding dephospho-CoA (dPCoA) and pyrophosphate. In Nitrosomonas eutropha (strain DSM 101675 / C91 / Nm57), this protein is Phosphopantetheine adenylyltransferase.